The following is a 348-amino-acid chain: D-alanine--D-alanine ligase (348 aa).

Residues 132–334 enclose the ATP-grasp domain; it reads KRILEVAGVP…YSDLIKELVV (203 aa). An ATP-binding site is contributed by 162-217; sequence LEKLTFPVFVKPANMGSSVGISKAENESELRSAIDLALKYDSRILIEQGVVAREIE. Aspartate 288, glutamate 301, and asparagine 303 together coordinate Mg(2+).

This sequence belongs to the D-alanine--D-alanine ligase family. Mg(2+) serves as cofactor. Requires Mn(2+) as cofactor.

It localises to the cytoplasm. The enzyme catalyses 2 D-alanine + ATP = D-alanyl-D-alanine + ADP + phosphate + H(+). The protein operates within cell wall biogenesis; peptidoglycan biosynthesis. Its function is as follows. Cell wall formation. The protein is D-alanine--D-alanine ligase of Streptococcus thermophilus (strain ATCC BAA-250 / LMG 18311).